The following is a 217-amino-acid chain: Membrane-associated progesterone receptor component 2 (217 aa).

An O-linked (Xyl...) (chondroitin sulfate) serine glycan is attached at serine 15. A helical transmembrane segment spans residues 40–62 (ALLATGGEMLLNVALVALVLLGA). 3 positions are modified to phosphoserine: serine 84, serine 98, and serine 202. Positions 96–195 (DFSLEQLRQY…EKYDYVGRLL (100 aa)) constitute a Cytochrome b5 heme-binding domain. The interval 196–217 (KPGEEPSEYTDEEDTKDHSKQD) is disordered. Acidic residues predominate over residues 200 to 209 (EPSEYTDEED). Tyrosine 204 carries the post-translational modification Phosphotyrosine. Residue threonine 205 is modified to Phosphothreonine.

It belongs to the cytochrome b5 family. MAPR subfamily. As to quaternary structure, interacts with PGRMC1. Interacts with AAAS. Expressed in brown adipose tissue, white adipose tissue, liver, heart, skeletal muscle, brain and adrenal gland.

It localises to the membrane. Its subcellular location is the nucleus envelope. The protein localises to the endoplasmic reticulum. It is found in the secreted. Functionally, required for the maintenance of uterine histoarchitecture and normal female reproductive lifespan. May serve as a universal non-classical progesterone receptor in the uterus. Intracellular heme chaperone required for delivery of labile, or signaling heme, to the nucleus. Plays a role in adipocyte function and systemic glucose homeostasis. In brown fat, which has a high demand for heme, delivery of labile heme in the nucleus regulates the activity of heme-responsive transcriptional repressors such as NR1D1 and BACH1. In Mus musculus (Mouse), this protein is Membrane-associated progesterone receptor component 2.